We begin with the raw amino-acid sequence, 401 residues long: Tyrosine--tRNA ligase (401 aa).

The 'HIGH' region motif lies at 42–51 (PTAPDIHLGH). Positions 226–230 (KMSKS) match the 'KMSKS' region motif. K229 is a binding site for ATP. An S4 RNA-binding domain is found at 334-394 (MGLATLLKEA…GKRKFARVRL (61 aa)).

Belongs to the class-I aminoacyl-tRNA synthetase family. TyrS type 2 subfamily. As to quaternary structure, homodimer.

It localises to the cytoplasm. The catalysed reaction is tRNA(Tyr) + L-tyrosine + ATP = L-tyrosyl-tRNA(Tyr) + AMP + diphosphate + H(+). Its function is as follows. Catalyzes the attachment of tyrosine to tRNA(Tyr) in a two-step reaction: tyrosine is first activated by ATP to form Tyr-AMP and then transferred to the acceptor end of tRNA(Tyr). The chain is Tyrosine--tRNA ligase from Haemophilus influenzae (strain ATCC 51907 / DSM 11121 / KW20 / Rd).